The sequence spans 294 residues: Phosphatidylserine decarboxylase proenzyme (294 aa).

Residues aspartate 113, histidine 169, and serine 256 each act as charge relay system; for autoendoproteolytic cleavage activity in the active site. Catalysis depends on serine 256, which acts as the Schiff-base intermediate with substrate; via pyruvic acid; for decarboxylase activity. The residue at position 256 (serine 256) is a Pyruvic acid (Ser); by autocatalysis.

Belongs to the phosphatidylserine decarboxylase family. PSD-B subfamily. Prokaryotic type II sub-subfamily. In terms of assembly, heterodimer of a large membrane-associated beta subunit and a small pyruvoyl-containing alpha subunit. The cofactor is pyruvate. Is synthesized initially as an inactive proenzyme. Formation of the active enzyme involves a self-maturation process in which the active site pyruvoyl group is generated from an internal serine residue via an autocatalytic post-translational modification. Two non-identical subunits are generated from the proenzyme in this reaction, and the pyruvate is formed at the N-terminus of the alpha chain, which is derived from the carboxyl end of the proenzyme. The autoendoproteolytic cleavage occurs by a canonical serine protease mechanism, in which the side chain hydroxyl group of the serine supplies its oxygen atom to form the C-terminus of the beta chain, while the remainder of the serine residue undergoes an oxidative deamination to produce ammonia and the pyruvoyl prosthetic group on the alpha chain. During this reaction, the Ser that is part of the protease active site of the proenzyme becomes the pyruvoyl prosthetic group, which constitutes an essential element of the active site of the mature decarboxylase.

It localises to the cell membrane. The enzyme catalyses a 1,2-diacyl-sn-glycero-3-phospho-L-serine + H(+) = a 1,2-diacyl-sn-glycero-3-phosphoethanolamine + CO2. The protein operates within phospholipid metabolism; phosphatidylethanolamine biosynthesis; phosphatidylethanolamine from CDP-diacylglycerol: step 2/2. Its function is as follows. Catalyzes the formation of phosphatidylethanolamine (PtdEtn) from phosphatidylserine (PtdSer). The protein is Phosphatidylserine decarboxylase proenzyme of Clostridium perfringens (strain ATCC 13124 / DSM 756 / JCM 1290 / NCIMB 6125 / NCTC 8237 / Type A).